The sequence spans 172 residues: Macro domain-containing protein CT2219 (172 aa).

One can recognise a Macro domain in the interval 1-172 (MPDNVLIHAI…DVYQKALAAG (172 aa)).

The protein belongs to the MacroD-type family.

In Chlorobaculum tepidum (strain ATCC 49652 / DSM 12025 / NBRC 103806 / TLS) (Chlorobium tepidum), this protein is Macro domain-containing protein CT2219.